The primary structure comprises 931 residues: Protocadherin gamma-A5 (931 aa).

Positions 1-29 (MASPPRGWGCGELLLPFMLLGTLCEPGSG) are cleaved as a signal peptide. Cadherin domains lie at 30 to 133 (QIRY…FPRF), 134 to 242 (RDEE…APLF), 243 to 347 (TPSE…APEV), 348 to 452 (ILTS…PPNF), 453 to 562 (PQAS…TPEI), and 570 to 683 (DGST…TPID). The Extracellular segment spans residues 30–692 (QIRYSMPEEL…DPEDLDLTLY (663 aa)). N419 and N545 each carry an N-linked (GlcNAc...) asparagine glycan. A helical membrane pass occupies residues 693–713 (LVVAVAAVSCVFLAFVIVLLV). The Cytoplasmic portion of the chain corresponds to 714–931 (LRLRRWHKSR…KKKSGKKEKK (218 aa)). Disordered regions lie at residues 800–840 (NKEE…WPNN) and 901–931 (ATLT…KEKK). The segment covering 809 to 840 (APPNTDWRFSQAQRPGTSGSQNGDDTGTWPNN) has biased composition (polar residues). Positions 921–931 (NKKKSGKKEKK) are enriched in basic residues.

Its subcellular location is the cell membrane. In terms of biological role, potential calcium-dependent cell-adhesion protein. May be involved in the establishment and maintenance of specific neuronal connections in the brain. This chain is Protocadherin gamma-A5 (PCDHGA5), found in Homo sapiens (Human).